A 679-amino-acid polypeptide reads, in one-letter code: Glycine--tRNA ligase beta subunit (679 aa).

This sequence belongs to the class-II aminoacyl-tRNA synthetase family. In terms of assembly, tetramer of two alpha and two beta subunits.

It localises to the cytoplasm. It catalyses the reaction tRNA(Gly) + glycine + ATP = glycyl-tRNA(Gly) + AMP + diphosphate. In Streptococcus pyogenes serotype M28 (strain MGAS6180), this protein is Glycine--tRNA ligase beta subunit.